Consider the following 272-residue polypeptide: NH(3)-dependent NAD(+) synthetase (272 aa).

Residue 45 to 52 (GISGGQDS) participates in ATP binding. Asp-51 is a Mg(2+) binding site. Position 138 (Arg-138) interacts with deamido-NAD(+). Thr-158 is an ATP binding site. Glu-163 serves as a coordination point for Mg(2+). Positions 171 and 178 each coordinate deamido-NAD(+). Positions 187 and 209 each coordinate ATP. 258–259 (HK) serves as a coordination point for deamido-NAD(+).

It belongs to the NAD synthetase family. As to quaternary structure, homodimer.

The catalysed reaction is deamido-NAD(+) + NH4(+) + ATP = AMP + diphosphate + NAD(+) + H(+). It participates in cofactor biosynthesis; NAD(+) biosynthesis; NAD(+) from deamido-NAD(+) (ammonia route): step 1/1. Functionally, catalyzes the ATP-dependent amidation of deamido-NAD to form NAD. Uses ammonia as a nitrogen source. The protein is NH(3)-dependent NAD(+) synthetase of Bacillus mycoides (strain KBAB4) (Bacillus weihenstephanensis).